We begin with the raw amino-acid sequence, 269 residues long: MVIRTGIAGVAGRMGGNLVRACLADPAVELTAAIARPGSPVVGRDAGELAGLSAIGLPVVGNLSEVSDKVDVLIDFTLPEVTLAHLESCRSAGIRLVIGTTGFSAEQRQLIAAAAEGMGIVFAPNMSVGVNLALKLLDIAARVVGEHADIEIVEAHHRHKIDAPSGTALRMGEVVAKALGRNLQDCAIYGREGITGIRDAKTIGFSTIRAGDIVGEHTVMFADEGERIEITHKASSRMTFAKGAVRAAVWLMSQGEGLFDMQDVLGLKG.

9 to 14 (GVAGRM) provides a ligand contact to NAD(+). Residue Arg36 coordinates NADP(+). NAD(+)-binding positions include 99–101 (GTT) and 123–126 (APNM). His156 functions as the Proton donor/acceptor in the catalytic mechanism. Residue His157 participates in (S)-2,3,4,5-tetrahydrodipicolinate binding. Lys160 (proton donor) is an active-site residue. 166–167 (GT) is a binding site for (S)-2,3,4,5-tetrahydrodipicolinate.

Belongs to the DapB family.

Its subcellular location is the cytoplasm. The enzyme catalyses (S)-2,3,4,5-tetrahydrodipicolinate + NAD(+) + H2O = (2S,4S)-4-hydroxy-2,3,4,5-tetrahydrodipicolinate + NADH + H(+). It carries out the reaction (S)-2,3,4,5-tetrahydrodipicolinate + NADP(+) + H2O = (2S,4S)-4-hydroxy-2,3,4,5-tetrahydrodipicolinate + NADPH + H(+). The protein operates within amino-acid biosynthesis; L-lysine biosynthesis via DAP pathway; (S)-tetrahydrodipicolinate from L-aspartate: step 4/4. Its function is as follows. Catalyzes the conversion of 4-hydroxy-tetrahydrodipicolinate (HTPA) to tetrahydrodipicolinate. In Methylococcus capsulatus (strain ATCC 33009 / NCIMB 11132 / Bath), this protein is 4-hydroxy-tetrahydrodipicolinate reductase.